A 271-amino-acid polypeptide reads, in one-letter code: 2-aminophenol 1,6-dioxygenase alpha subunit (271 aa).

It belongs to the LigB/MhpB extradiol dioxygenase family. In terms of assembly, heterotetramer of 2 alpha and 2 beta subunits.

Functionally, component of the 2-aminophenol 1,6-dioxygenase complex that catalyzes the ring fission of 2-aminophenol to produce 2-aminomuconic 6-semialdehyde. AmnA seems to have a role in the stability of the complex. The chain is 2-aminophenol 1,6-dioxygenase alpha subunit (amnA) from Pseudomonas sp.